A 1504-amino-acid polypeptide reads, in one-letter code: Nischarin (1504 aa).

Alanine 2 is subject to N-acetylalanine. A necessary for binding to phosphoinositide-3-P; not sufficient for targeting to endosomes region spans residues 2–133 (ATARTFGPER…GITAALAEEL (132 aa)). Residues 11-121 (REAEPAKEAR…AHFLHFHFYE (111 aa)) form the PX domain. A necessary for homooligomerization and targeting to endosomes region spans residues 120–695 (YEINGITAAL…ERLALEWALG (576 aa)). Residues 245-869 (LSVRFSATSM…LVYSDKRMVQ (625 aa)) are interaction with PAK1. 6 LRR repeats span residues 288–309 (ALTT…VKLI), 311–332 (KIEF…QHLY), 333–354 (NLVH…HTKL), 356–377 (NIKT…HKLY), 378–399 (SLVN…RSIG), and 403–424 (CLEH…RTKV). Over residues 463–478 (KSKLSNPEKKGGEDSR) the composition is skewed to basic and acidic residues. Disordered regions lie at residues 463 to 501 (KSKL…SASL), 524 to 547 (SSTD…LESI), 554 to 573 (SDDL…EHAE), and 628 to 687 (REEG…EEER). A phosphoserine mark is found at serine 541, serine 543, and serine 546. A coiled-coil region spans residues 634–695 (EQGEEEDEEE…ERLALEWALG (62 aa)). Acidic residues-rich tracts occupy residues 635 to 649 (QGEE…EEDV) and 661 to 685 (DVEE…EAEE). The segment at 660–869 (PDVEEEEGGG…LVYSDKRMVQ (210 aa)) is interaction with LIMK. Residues 709–807 (KVLWCFLIHV…ANLHEFHADL (99 aa)) form an interaction with ITGA5 region. A disordered region spans residues 1016–1104 (TPGTGGSPQG…PAPPPAEAPA (89 aa)). A Phosphoserine modification is found at serine 1022. Residues 1032–1043 (PAERRASNDQRP) show a composition bias toward basic and acidic residues. Residues 1063–1078 (PAAASASGPAKTPAPA) are compositionally biased toward low complexity. Threonine 1282 bears the Phosphothreonine mark. At serine 1284 the chain carries Phosphoserine.

Homooligomer. Interacts with GRB2. Interacts with PIK3R1; probably associates with the PI3-kinase complex. Interacts with IRS4. Found in a complex with ITGA5 and PAK1. Found in a complex with LIMK1 and PAK1. Interacts with ITGA5 (via cytoplasmic domain); this interaction is direct. Interacts with PAK1 (via kinase domain); this interaction is direct and is increased upon activation of PAK1. Interacts with LIMK1 (via PDZ and kinase domain); this interaction is direct. Interacts with LIMK2; this interaction depends on LIMK2 activity. Interacts with RAC1 (activated state). Interacts with STK11; this interaction may increase STK11 activity. In terms of tissue distribution, isoform 1, isoform 3 and isoform 4 are expressed in brain. Isoform 1 is expressed in endocrine tissues.

Its subcellular location is the cell membrane. It is found in the cytoplasm. The protein resides in the early endosome. The protein localises to the recycling endosome. Acts either as the functional imidazoline-1 receptor (I1R) candidate or as a membrane-associated mediator of the I1R signaling. Binds numerous imidazoline ligands that induces initiation of cell-signaling cascades triggering to cell survival, growth and migration. Its activation by the agonist rilmenidine induces an increase in phosphorylation of mitogen-activated protein kinases MAPK1 and MAPK3 in rostral ventrolateral medulla (RVLM) neurons that exhibited rilmenidine-evoked hypotension. Blocking its activation with efaroxan abolished rilmenidine-induced mitogen-activated protein kinase phosphorylation in RVLM neurons. Acts as a modulator of Rac-regulated signal transduction pathways. Suppresses Rac1-stimulated cell migration by interacting with PAK1 and inhibiting its kinase activity. Also blocks Pak-independent Rac signaling by interacting with RAC1 and inhibiting Rac1-stimulated NF-kB response element and cyclin D1 promoter activation. Also inhibits LIMK1 kinase activity by reducing LIMK1 'Tyr-508' phosphorylation. Inhibits Rac-induced cell migration and invasion in breast and colon epithelial cells. Inhibits lamellipodia formation, when overexpressed. Plays a role in protection against apoptosis. Involved in association with IRS4 in the enhancement of insulin activation of MAPK1 and MAPK3. When overexpressed, induces a redistribution of cell surface ITGA5 integrin to intracellular endosomal structures. This chain is Nischarin (NISCH), found in Homo sapiens (Human).